Reading from the N-terminus, the 208-residue chain is Uracil phosphoribosyltransferase (208 aa).

5-phospho-alpha-D-ribose 1-diphosphate contacts are provided by residues Arg78, Arg103, and 130 to 138; that span reads DPMLATGGS. Uracil contacts are provided by residues Ile193 and 198–200; that span reads GDA. A 5-phospho-alpha-D-ribose 1-diphosphate-binding site is contributed by Asp199.

It belongs to the UPRTase family. Mg(2+) is required as a cofactor.

It catalyses the reaction UMP + diphosphate = 5-phospho-alpha-D-ribose 1-diphosphate + uracil. It functions in the pathway pyrimidine metabolism; UMP biosynthesis via salvage pathway; UMP from uracil: step 1/1. With respect to regulation, allosterically activated by GTP. Functionally, catalyzes the conversion of uracil and 5-phospho-alpha-D-ribose 1-diphosphate (PRPP) to UMP and diphosphate. In Shewanella baltica (strain OS223), this protein is Uracil phosphoribosyltransferase.